The primary structure comprises 352 residues: Histidine biosynthesis bifunctional protein HisB (352 aa).

The histidinol-phosphatase stretch occupies residues 1 to 163 (MKKILFIDRD…MVASAIINDA (163 aa)). The active-site Nucleophile is the aspartate 8. Mg(2+) contacts are provided by aspartate 8 and aspartate 10. Catalysis depends on aspartate 10, which acts as the Proton donor. 4 residues coordinate Zn(2+): cysteine 91, histidine 93, cysteine 99, and cysteine 101. Residue aspartate 128 coordinates Mg(2+). The imidazoleglycerol-phosphate dehydratase stretch occupies residues 164 to 352 (RKASVQRKTK…NYLPSTKGVL (189 aa)).

In the N-terminal section; belongs to the histidinol-phosphatase family. This sequence in the C-terminal section; belongs to the imidazoleglycerol-phosphate dehydratase family. Mg(2+) is required as a cofactor. Zn(2+) serves as cofactor.

It localises to the cytoplasm. The catalysed reaction is D-erythro-1-(imidazol-4-yl)glycerol 3-phosphate = 3-(imidazol-4-yl)-2-oxopropyl phosphate + H2O. It catalyses the reaction L-histidinol phosphate + H2O = L-histidinol + phosphate. Its pathway is amino-acid biosynthesis; L-histidine biosynthesis; L-histidine from 5-phospho-alpha-D-ribose 1-diphosphate: step 6/9. The protein operates within amino-acid biosynthesis; L-histidine biosynthesis; L-histidine from 5-phospho-alpha-D-ribose 1-diphosphate: step 8/9. The protein is Histidine biosynthesis bifunctional protein HisB of Legionella pneumophila subsp. pneumophila (strain Philadelphia 1 / ATCC 33152 / DSM 7513).